Here is a 775-residue protein sequence, read N- to C-terminus: Polyribonucleotide nucleotidyltransferase (775 aa).

Mg(2+) is bound by residues D487 and D493. A KH domain is found at 554–613 (PKVEVVDVPEEKAPLIIGPGGSTVKKIYDETGVKVWVGEQGKVYLFVFPGGDVEKAKQMI). S1 motif domains follow at residues 623-693 (GAVY…IGIE) and 707-775 (GDVY…TDDV).

The protein belongs to the polyribonucleotide nucleotidyltransferase family. Requires Mg(2+) as cofactor.

It is found in the cytoplasm. It carries out the reaction RNA(n+1) + phosphate = RNA(n) + a ribonucleoside 5'-diphosphate. Involved in mRNA degradation. Catalyzes the phosphorolysis of single-stranded polyribonucleotides processively in the 3'- to 5'-direction. This Aquifex aeolicus (strain VF5) protein is Polyribonucleotide nucleotidyltransferase.